Here is a 547-residue protein sequence, read N- to C-terminus: Cellodextrinase (547 aa).

Residue Asp-148 is the Nucleophile of the active site. Residues His-474, Asp-520, and Glu-529 contribute to the active site.

The protein belongs to the glycosyl hydrolase 9 (cellulase E) family.

The protein resides in the secreted. The catalysed reaction is Endohydrolysis of (1-&gt;4)-beta-D-glucosidic linkages in cellulose, lichenin and cereal beta-D-glucans.. With respect to regulation, is not inhibited by methylcellulose. In terms of biological role, glycoside hydrolase that rapidly hydrolyzes short-chain cellodextrins to yield either cellobiose or cellobiose and glucose as end products; cellobiose is not hydrolyzed further. Also shows limited activity against endoglucanase specific substrates (carboxymethylcellulose (CMC), lichenan, laminarin and xylan). In Butyrivibrio fibrisolvens, this protein is Cellodextrinase.